The primary structure comprises 777 residues: Subtilisin-like protease SBT3.7 (777 aa).

The first 22 residues, 1–22 (MRNHRTSIFVVLSLVIILNGQS), serve as a signal peptide directing secretion. A propeptide spans 23-113 (GFLPRAGAES…VIPDRFYKPA (91 aa)) (activation peptide). Residues 34 to 111 (VHIVYLGEKQ…VHVIPDRFYK (78 aa)) form the Inhibitor I9 domain. The region spanning 117 to 624 (TWDYLGLSPT…GGLVNPEKAT (508 aa)) is the Peptidase S8 domain. Asn133 is a glycosylation site (N-linked (GlcNAc...) asparagine). Catalysis depends on Asp147, which acts as the Charge relay system. N-linked (GlcNAc...) asparagine glycans are attached at residues Asn180 and Asn206. His222 acts as the Charge relay system in catalysis. 4 N-linked (GlcNAc...) asparagine glycosylation sites follow: Asn237, Asn397, Asn412, and Asn540. The 96-residue stretch at 386–481 (SLVYPENPGN…ELGTYILFYI (96 aa)) folds into the PA domain. The active-site Charge relay system is Ser555. 3 N-linked (GlcNAc...) asparagine glycosylation sites follow: Asn647, Asn723, and Asn758.

Belongs to the peptidase S8 family.

Its subcellular location is the secreted. The polypeptide is Subtilisin-like protease SBT3.7 (Arabidopsis thaliana (Mouse-ear cress)).